A 480-amino-acid chain; its full sequence is Ciliated left-right organizer protein containing ZP-N domains homolog (480 aa).

Positions M1 to S23 are cleaved as a signal peptide.

As to expression, expressed specifically by cells of the ciliated left-right organizer.

Its subcellular location is the secreted. This is Ciliated left-right organizer protein containing ZP-N domains homolog from Xenopus tropicalis (Western clawed frog).